The sequence spans 1407 residues: Trichohyalin (1407 aa).

The tract at residues 1–91 is S-100-like; the sequence is MSPLLKSIID…AQAAYYALGQ (91 aa). 2 EF-hand domains span residues 23-48 and 49-84; these read CDGA…LQRP and HDPE…LAQA. Ca(2+) contacts are provided by Asp32, Asp62, Asp64, Asp66, and Glu73. Disordered regions lie at residues 148 to 172, 218 to 237, 362 to 471, 486 to 587, 1014 to 1033, 1062 to 1082, and 1313 to 1407; these read EEEE…DKEQ, LREE…RALQ, REQA…EEEQ, EQLQ…ERER, REEE…EEER, KEEK…EEQQ, and EQFA…QYRP. Basic and acidic residues-rich tracts occupy residues 362–381, 396–424, 447–471, and 554–587; these read REQA…RQLE, RRQE…EQAR, SLRE…EEEQ, and QREK…ERER. The span at 1313–1376 shows a compositional bias: basic and acidic residues; the sequence is EQFAREEKSR…FREDQSRRQV (64 aa).

The protein belongs to the S100-fused protein family. As to quaternary structure, homodimer. In terms of processing, substrate of transglutaminase. Some 200 arginines are probably converted to citrullines by peptidylarginine deimidase. Found in the hard keratinizing tissues such as the inner root sheath (IRS) of hair follicles and medulla, and in the filiform papillae of dorsal tongue epithelium.

Its function is as follows. Intermediate filament-associated protein that associates in regular arrays with keratin intermediate filaments (KIF) of the inner root sheath cells of the hair follicle and the granular layer of the epidermis. It later becomes cross-linked to KIF by isodipeptide bonds. It may serve as scaffold protein, together with involucrin, in the organization of the cell envelope or even anchor the cell envelope to the KIF network. It may be involved in its own calcium-dependent postsynthetic processing during terminal differentiation. This Oryctolagus cuniculus (Rabbit) protein is Trichohyalin (TCHH).